The primary structure comprises 421 residues: Trimethyllysine dioxygenase, mitochondrial (421 aa).

The N-terminal 15 residues, 1 to 15, are a transit peptide targeting the mitochondrion; it reads MWYHKLLHQQSRLQN. N6-acetyllysine occurs at positions 179 and 236. Residues His242, Asp244, and His389 each contribute to the Fe cation site.

This sequence belongs to the gamma-BBH/TMLD family. In terms of assembly, homodimer. It depends on Fe(2+) as a cofactor. L-ascorbate serves as cofactor.

It is found in the mitochondrion matrix. It catalyses the reaction N(6),N(6),N(6)-trimethyl-L-lysine + 2-oxoglutarate + O2 = (3S)-3-hydroxy-N(6),N(6),N(6)-trimethyl-L-lysine + succinate + CO2. The protein operates within amine and polyamine biosynthesis; carnitine biosynthesis. In terms of biological role, converts trimethyllysine (TML) into hydroxytrimethyllysine (HTML). This Rattus norvegicus (Rat) protein is Trimethyllysine dioxygenase, mitochondrial (Tmlhe).